We begin with the raw amino-acid sequence, 595 residues long: Outer dynein arm-docking complex subunit 3 (595 aa).

Residues 1–69 (MTSPLCRAAS…RGAGKPSVHS (69 aa)) are disordered. Coiled-coil stretches lie at residues 94–327 (WNIK…REHL) and 385–473 (FAQL…ASKL).

Component of the outer dynein arm-docking complex along with ODAD1, ODAD2, ODAD4 and CLXN. Interacts with ODAD1. Interacts with PIERCE1 and PIERCE2; the interactions link the outer dynein arms docking complex (ODA-DC) to the internal microtubule inner proteins (MIP) in cilium axoneme.

The protein localises to the cytoplasm. It localises to the cytoskeleton. The protein resides in the cilium basal body. Its subcellular location is the microtubule organizing center. It is found in the centrosome. The protein localises to the centriole. It localises to the cilium axoneme. Component of the outer dynein arm-docking complex (ODA-DC) that mediates outer dynein arms (ODA) binding onto the doublet microtubule. Involved in mediating assembly of both ODAs and their axonemal docking complex onto ciliary microtubules. The chain is Outer dynein arm-docking complex subunit 3 from Homo sapiens (Human).